The sequence spans 194 residues: Recombination protein RecR (194 aa).

A C4-type zinc finger spans residues Cys-55–Cys-70. Residues Ser-78 to Pro-171 form the Toprim domain.

It belongs to the RecR family.

Functionally, may play a role in DNA repair. It seems to be involved in an RecBC-independent recombinational process of DNA repair. It may act with RecF and RecO. This is Recombination protein RecR from Thermus thermophilus (strain ATCC BAA-163 / DSM 7039 / HB27).